We begin with the raw amino-acid sequence, 467 residues long: MDRKKKPLDVTASSLVDLKAELFRKQEEFKQEKLLKDSGVFGKPKTINKKPSIWSKQNAGVTSRAEKDAEQKLEEQKTLDKAREKLEEKAKLYEKMTKGDFLDEEVEDMYLVDFTQKIIVKRKEMEVLGATRESQIEEERDDDDKEEFSDKDIPPPQDPSEEWVDYVDSLGRSRRCMRKDLPSLLEMDKNLQGRLFVSPANEKTLLSEDMRKELQRQQWEEEEREALKKPMGPIHYEDIRENEARQLGVGYFAFARDKELRNKQMKTLEMLREQTTDQRIKRENIKEKRKAMLEARLAKLRQKKMKKSKEDGTEEEGREADGVVPEPSEPKPVPAPAPVAQNSKVEVIIQERRDTKPGVPHIREWDRGKDFSFGFWSKKQSELRAERDPEFAPPSNYFVGQKRTAPMSSQPQSRPGSAPSDLGHSSGQSQEPSSSHTSTPASESSPQAPTVTFQTLDDMISYYKQVT.

2 disordered regions span residues 47-76 (INKKPSIWSKQNAGVTSRAEKDAEQKLEEQ) and 129-163 (GATRESQIEEERDDDDKEEFSDKDIPPPQDPSEEW). Positions 64-76 (RAEKDAEQKLEEQ) are enriched in basic and acidic residues. Residues 64-99 (RAEKDAEQKLEEQKTLDKAREKLEEKAKLYEKMTKG) are a coiled coil. Residues 136 to 147 (IEEERDDDDKEE) show a composition bias toward acidic residues. The residue at position 198 (serine 198) is a Phosphoserine. Residues 268-310 (LEMLREQTTDQRIKRENIKEKRKAMLEARLAKLRQKKMKKSKE) are a coiled coil. Disordered stretches follow at residues 301 to 365 (RQKK…IREW) and 379 to 454 (KQSE…VTFQ). Basic and acidic residues-rich tracts occupy residues 349-365 (IQERRDTKPGVPHIREW) and 379-390 (KQSELRAERDPE). Positions 406–415 (PMSSQPQSRP) are enriched in polar residues. Positions 423-446 (GHSSGQSQEPSSSHTSTPASESSP) are enriched in low complexity.

The protein resides in the nucleus. Its function is as follows. Probably involved in neuronal development. The polypeptide is Coiled-coil domain-containing protein 174 (Ccdc174) (Mus musculus (Mouse)).